A 944-amino-acid chain; its full sequence is Protein translocase subunit SecA (944 aa).

ATP-binding positions include Gln77, 95-99 (GEGKT), and Asp484. A disordered region spans residues 920 to 944 (EQEKQTKKKKKKKPHDDETTKVKIG). Residues 933 to 944 (PHDDETTKVKIG) show a composition bias toward basic and acidic residues.

The protein belongs to the SecA family. Monomer and homodimer. Part of the essential Sec protein translocation apparatus which comprises SecA, SecYEG and auxiliary proteins SecDF. Other proteins may also be involved.

Its subcellular location is the cell membrane. It is found in the cytoplasm. The catalysed reaction is ATP + H2O + cellular proteinSide 1 = ADP + phosphate + cellular proteinSide 2.. Its function is as follows. Part of the Sec protein translocase complex. Interacts with the SecYEG preprotein conducting channel. Has a central role in coupling the hydrolysis of ATP to the transfer of proteins into and across the cell membrane, serving as an ATP-driven molecular motor driving the stepwise translocation of polypeptide chains across the membrane. This Mycoplasma capricolum subsp. capricolum (strain California kid / ATCC 27343 / NCTC 10154) protein is Protein translocase subunit SecA.